The primary structure comprises 147 residues: Hemoglobin subunit beta (147 aa).

The region spanning 3–147 (HWTAEEKQLI…VAHALARKYH (145 aa)) is the Globin domain. His64 and His93 together coordinate heme b.

It belongs to the globin family. In terms of assembly, heterotetramer of two alpha chains and two beta chains. As to expression, red blood cells.

In terms of biological role, involved in oxygen transport from the lung to the various peripheral tissues. This is Hemoglobin subunit beta (HBB) from Anas platyrhynchos (Mallard).